A 275-amino-acid chain; its full sequence is NH(3)-dependent NAD(+) synthetase (275 aa).

Residue 50 to 57 coordinates ATP; sequence GISGGVDS. A Mg(2+)-binding site is contributed by Asp-56. Arg-147 provides a ligand contact to deamido-NAD(+). Residue Thr-167 coordinates ATP. Position 172 (Glu-172) interacts with Mg(2+). 2 residues coordinate deamido-NAD(+): Lys-180 and Asp-187. Positions 196 and 218 each coordinate ATP. 267–268 is a binding site for deamido-NAD(+); it reads HK.

The protein belongs to the NAD synthetase family. As to quaternary structure, homodimer.

The enzyme catalyses deamido-NAD(+) + NH4(+) + ATP = AMP + diphosphate + NAD(+) + H(+). Its pathway is cofactor biosynthesis; NAD(+) biosynthesis; NAD(+) from deamido-NAD(+) (ammonia route): step 1/1. In terms of biological role, catalyzes the ATP-dependent amidation of deamido-NAD to form NAD. Uses ammonia as a nitrogen source. This is NH(3)-dependent NAD(+) synthetase from Pseudomonas syringae pv. syringae (strain B728a).